A 520-amino-acid polypeptide reads, in one-letter code: Cyclin-L2 (520 aa).

2 cyclin-like regions span residues 81–183 (ELIQ…RVLK) and 196–280 (KIIV…KILQ). Positions 309-520 (RAKGLLPPGS…DHPGHSRHRR (212 aa)) are disordered. Ser330, Ser337, Ser347, and Ser350 each carry phosphoserine. Over residues 356–366 (RKMEGPKKAKG) the composition is skewed to basic and acidic residues. Ser368 carries the phosphoserine modification. Positions 384–422 (RSREQSYSRSPSRSASPKRRKSDSGSTSGGSKSQSRSRS) are RS. A compositionally biased stretch (low complexity) spans 407–429 (SGSTSGGSKSQSRSRSRSDSPPR). Residues 440–453 (SEVRGSRKSKDCKH) show a composition bias toward basic and acidic residues. Basic residues predominate over residues 454–471 (LTQKPHKSRSRSSSRSRS). Basic and acidic residues-rich tracts occupy residues 472 to 481 (RSRERTDSSG) and 489 to 514 (YYRD…DHPG).

The protein belongs to the cyclin family. Cyclin L subfamily. Interacts with CDK11A, CDK11B, CDK12, CDK13 and POLR2A, the hyperphosphorylated C-terminal domain (CTD) of RNA polymerase II. May form a ternary complex with CDK11B and casein kinase II (CKII). Interacts with pre-mRNA-splicing factors, including at least SRSF1, SRSF2 and SRSF7/SLU7.

It localises to the nucleus speckle. The protein localises to the nucleus. Its subcellular location is the nucleoplasm. Functionally, involved in pre-mRNA splicing. May induce cell death, possibly by acting on the transcription and RNA processing of apoptosis-related factors. This Rattus norvegicus (Rat) protein is Cyclin-L2 (Ccnl2).